The primary structure comprises 269 residues: Embryonic polyadenylate-binding protein 2 (269 aa).

A disordered region spans residues 26–54 (EAQGWGAWGRTEKTSLVPSAGSDKEAEEN). Positions 139-216 (RSVYVGNVDY…RVIKVLPKRT (78 aa)) constitute an RRM domain. Residues 240-269 (LQGSLQRKPRLRPHGQSRGRGRASPWFSPY) are disordered. Positions 246–260 (RKPRLRPHGQSRGRG) are enriched in basic residues.

It is found in the cytoplasm. In terms of biological role, binds the poly(A) tail of mRNA. The sequence is that of Embryonic polyadenylate-binding protein 2 (Pabpn1l) from Rattus norvegicus (Rat).